A 185-amino-acid polypeptide reads, in one-letter code: Large ribosomal subunit protein uL5 (185 aa).

This sequence belongs to the universal ribosomal protein uL5 family. As to quaternary structure, part of the 50S ribosomal subunit; part of the 5S rRNA/L5/L18/L25 subcomplex. Contacts the 5S rRNA and the P site tRNA. Forms a bridge to the 30S subunit in the 70S ribosome.

In terms of biological role, this is one of the proteins that bind and probably mediate the attachment of the 5S RNA into the large ribosomal subunit, where it forms part of the central protuberance. In the 70S ribosome it contacts protein S13 of the 30S subunit (bridge B1b), connecting the 2 subunits; this bridge is implicated in subunit movement. Contacts the P site tRNA; the 5S rRNA and some of its associated proteins might help stabilize positioning of ribosome-bound tRNAs. The polypeptide is Large ribosomal subunit protein uL5 (Bartonella henselae (strain ATCC 49882 / DSM 28221 / CCUG 30454 / Houston 1) (Rochalimaea henselae)).